Here is an 84-residue protein sequence, read N- to C-terminus: Small ribosomal subunit protein bS16 (84 aa).

The protein belongs to the bacterial ribosomal protein bS16 family.

The chain is Small ribosomal subunit protein bS16 from Deinococcus radiodurans (strain ATCC 13939 / DSM 20539 / JCM 16871 / CCUG 27074 / LMG 4051 / NBRC 15346 / NCIMB 9279 / VKM B-1422 / R1).